The chain runs to 123 residues: UPF0102 protein APP7_1414 (123 aa).

Belongs to the UPF0102 family.

This chain is UPF0102 protein APP7_1414, found in Actinobacillus pleuropneumoniae serotype 7 (strain AP76).